A 230-amino-acid polypeptide reads, in one-letter code: Ribosome-recycling factor, mitochondrial (230 aa).

The transit peptide at 1-24 (MILTTARLNCRPVTVPRLFNRSFS) directs the protein to the mitochondrion.

The protein belongs to the RRF family.

Its subcellular location is the mitochondrion. In terms of biological role, necessary for protein synthesis in mitochondria. Functions as a ribosome recycling factor in mitochondria. This Saccharomyces cerevisiae (strain ATCC 204508 / S288c) (Baker's yeast) protein is Ribosome-recycling factor, mitochondrial (RRF1).